The chain runs to 367 residues: Probable protein phosphatase 2C 67 (367 aa).

Residues 1 to 79 (MAHQKREATS…DEKAATNSNV (79 aa)) form a disordered region. The segment covering 31 to 46 (AEKEHILTSDASHETN) has biased composition (basic and acidic residues). The 275-residue stretch at 91–365 (EADAAEDKGC…DNCTAVLIVF (275 aa)) folds into the PPM-type phosphatase domain. 4 residues coordinate Mn(2+): D131, G132, D312, and D356.

It belongs to the PP2C family. Requires Mg(2+) as cofactor. The cofactor is Mn(2+).

The enzyme catalyses O-phospho-L-seryl-[protein] + H2O = L-seryl-[protein] + phosphate. It carries out the reaction O-phospho-L-threonyl-[protein] + H2O = L-threonyl-[protein] + phosphate. The polypeptide is Probable protein phosphatase 2C 67 (Oryza sativa subsp. japonica (Rice)).